Reading from the N-terminus, the 190-residue chain is Putative acetyltransferase DDB_G0275913 (190 aa).

It belongs to the transferase hexapeptide repeat family.

The polypeptide is Putative acetyltransferase DDB_G0275913 (Dictyostelium discoideum (Social amoeba)).